A 291-amino-acid chain; its full sequence is tRNA U34 carboxymethyltransferase (291 aa).

Carboxy-S-adenosyl-L-methionine contacts are provided by residues Lys-61, Trp-75, Lys-80, Gly-100, 122–124 (DPS), 149–150 (VE), Tyr-169, and Arg-284.

It belongs to the class I-like SAM-binding methyltransferase superfamily. CmoB family. Homotetramer.

It carries out the reaction carboxy-S-adenosyl-L-methionine + 5-hydroxyuridine(34) in tRNA = 5-carboxymethoxyuridine(34) in tRNA + S-adenosyl-L-homocysteine + H(+). Its function is as follows. Catalyzes carboxymethyl transfer from carboxy-S-adenosyl-L-methionine (Cx-SAM) to 5-hydroxyuridine (ho5U) to form 5-carboxymethoxyuridine (cmo5U) at position 34 in tRNAs. This chain is tRNA U34 carboxymethyltransferase, found in Campylobacter jejuni (strain RM1221).